Here is a 148-residue protein sequence, read N- to C-terminus: UPF0260 protein ECA2365 (148 aa).

It belongs to the UPF0260 family.

This chain is UPF0260 protein ECA2365, found in Pectobacterium atrosepticum (strain SCRI 1043 / ATCC BAA-672) (Erwinia carotovora subsp. atroseptica).